The following is a 63-amino-acid chain: Large ribosomal subunit protein bL32 (63 aa).

The disordered stretch occupies residues 1–20; it reads MANPKAKMSKSRRDKRRAQF. A compositionally biased stretch (basic residues) spans 7-18; it reads KMSKSRRDKRRA.

The protein belongs to the bacterial ribosomal protein bL32 family.

This chain is Large ribosomal subunit protein bL32, found in Chlorobaculum parvum (strain DSM 263 / NCIMB 8327) (Chlorobium vibrioforme subsp. thiosulfatophilum).